The chain runs to 641 residues: Pre-mRNA-processing factor 39 (641 aa).

Positions Met1–Pro50 are disordered. Over residues Glu10–Ala23 the composition is skewed to low complexity. Residues Thr24–Pro50 are compositionally biased toward pro residues. HAT repeat units follow at residues Pro50–Gln82, Asn84–Lys116, Asn118–Glu150, Glu158–Glu193, Asn304–Glu336, Gly338–Asn370, and Ser372–Asn407.

Belongs to the PRP39 family.

Its subcellular location is the nucleus. Functionally, involved in pre-mRNA splicing. The protein is Pre-mRNA-processing factor 39 (prpf39) of Xenopus laevis (African clawed frog).